Here is a 498-residue protein sequence, read N- to C-terminus: Trichoplein keratin filament-binding protein (498 aa).

The stretch at 11-39 (CSQQRLNQQLARQREQEARLRQQWEQNSR) forms a coiled coil. Residues Lys-50 and Lys-57 each participate in a glycyl lysine isopeptide (Lys-Gly) (interchain with G-Cter in ubiquitin) cross-link. Coiled coils occupy residues 66–136 (AYQR…LIAE), 163–353 (VNSW…LREE), and 380–479 (LTGR…EAET). Residues 73-498 (KEEKRRSLEA…PYGHPKIAWN (426 aa)) are interaction with keratin proteins. Residues 167-189 (EMQKEEKKQQEATAEQENKRYEN) form a disordered region. Basic and acidic residues predominate over residues 168-189 (MQKEEKKQQEATAEQENKRYEN). The segment at 259–425 (KQMEAFRQKA…RELARREKEE (167 aa)) is trichohyalin/plectin homology domain. Residues 447-498 (QAWEADQQEEEEEEEARRVEQLSDALLQQEAETMAEQGYRPKPYGHPKIAWN) form a disordered region.

Belongs to the TCHP family. Interacts specifically with keratin proteins including, KRT5, KRT6A, KRT8, KRT14, KRT16 and KRT18. Interacts with KCTD17. Post-translationally, ubiquitinated. Ubiquitination by the BCR(KCTD17) E3 ubiquitin ligase complex results in proteasomal degradation, and induces ciliogenesis. In terms of tissue distribution, expressed at high levels in normal urothelial and breast epithelial cells. Also expressed in the smooth muscle and endothelial cells. Reduced expression seen in advanced bladder and breast carcinomas (at protein level). Ubiquitous. Expressed at highest levels in the heart, skeletal muscle, kidney, liver and testis.

It is found in the cytoplasm. It localises to the cytoskeleton. The protein localises to the cell membrane. The protein resides in the mitochondrion. Its subcellular location is the cell junction. It is found in the desmosome. It localises to the microtubule organizing center. The protein localises to the centrosome. Functionally, tumor suppressor which has the ability to inhibit cell growth and be pro-apoptotic during cell stress. Inhibits cell growth in bladder and prostate cancer cells by a down-regulation of HSPB1 by inhibiting its phosphorylation. May act as a 'capping' or 'branching' protein for keratin filaments in the cell periphery. May regulate K8/K18 filament and desmosome organization mainly at the apical or peripheral regions of simple epithelial cells. Is a negative regulator of ciliogenesis. This is Trichoplein keratin filament-binding protein from Homo sapiens (Human).